A 308-amino-acid chain; its full sequence is Polyprenal reductase (308 aa).

Residues Met-1–Thr-2 are Cytoplasmic-facing. A helical membrane pass occupies residues Leu-3–Leu-23. The Lumenal segment spans residues Leu-24 to Arg-65. Residues Cys-66–Leu-86 traverse the membrane as a helical segment. The Cytoplasmic segment spans residues Arg-87–Ser-120. The helical transmembrane segment at Val-121–Phe-141 threads the bilayer. Residues Val-142–Gly-148 are Lumenal-facing. Residues Val-149–Val-169 traverse the membrane as a helical segment. Residues Leu-170–Asn-184 are Cytoplasmic-facing. A helical transmembrane segment spans residues Leu-185–Leu-205. The Lumenal portion of the chain corresponds to His-206–Ser-255. The chain crosses the membrane as a helical span at residues Ile-256–Leu-276. Topologically, residues Asn-277 to Phe-308 are cytoplasmic.

This sequence belongs to the steroid 5-alpha reductase family. Polyprenal reductase subfamily.

It localises to the endoplasmic reticulum membrane. The catalysed reaction is a di-trans,poly-cis-dolichal + NADP(+) = a di-trans,poly-cis-polyprenal + NADPH + H(+). The enzyme catalyses a 3-oxo-5alpha-steroid + NADP(+) = a 3-oxo-Delta(4)-steroid + NADPH + H(+). It catalyses the reaction androst-4-ene-3,17-dione + NADPH + H(+) = 5alpha-androstan-3,17-dione + NADP(+). It carries out the reaction 17beta-hydroxy-5alpha-androstan-3-one + NADP(+) = testosterone + NADPH + H(+). It functions in the pathway protein modification; protein glycosylation. Functionally, plays a key role in early steps of protein N-linked glycosylation by being involved in the conversion of polyprenol into dolichol. Acts as a polyprenal reductase that mediates the reduction of polyprenal into dolichal in a NADP-dependent mechanism. Dolichols are required for the synthesis of dolichol-linked monosaccharides and the oligosaccharide precursor used for N-glycosylation. Also able to convert testosterone (T) into 5-alpha-dihydrotestosterone (DHT). The chain is Polyprenal reductase (srd5a3) from Xenopus tropicalis (Western clawed frog).